Consider the following 154-residue polypeptide: Sec-independent protein translocase protein TatB (154 aa).

Residues 1–21 form a helical membrane-spanning segment; the sequence is MIDIGITKLAIIGGIALIVIG.

This sequence belongs to the TatB family. The Tat system comprises two distinct complexes: a TatABC complex, containing multiple copies of TatA, TatB and TatC subunits, and a separate TatA complex, containing only TatA subunits. Substrates initially bind to the TatABC complex, which probably triggers association of the separate TatA complex to form the active translocon.

It is found in the cell inner membrane. Its function is as follows. Part of the twin-arginine translocation (Tat) system that transports large folded proteins containing a characteristic twin-arginine motif in their signal peptide across membranes. Together with TatC, TatB is part of a receptor directly interacting with Tat signal peptides. TatB may form an oligomeric binding site that transiently accommodates folded Tat precursor proteins before their translocation. The sequence is that of Sec-independent protein translocase protein TatB from Albidiferax ferrireducens (strain ATCC BAA-621 / DSM 15236 / T118) (Rhodoferax ferrireducens).